The chain runs to 254 residues: Diphthine synthase (254 aa).

S-adenosyl-L-methionine is bound by residues L11, D86, I89, 114–115 (SV), L166, L207, and H232.

The protein belongs to the diphthine synthase family. As to quaternary structure, homodimer.

It catalyses the reaction 2-[(3S)-amino-3-carboxypropyl]-L-histidyl-[translation elongation factor 2] + 3 S-adenosyl-L-methionine = diphthine-[translation elongation factor 2] + 3 S-adenosyl-L-homocysteine + 3 H(+). It participates in protein modification; peptidyl-diphthamide biosynthesis. S-adenosyl-L-methionine-dependent methyltransferase that catalyzes the trimethylation of the amino group of the modified target histidine residue in translation elongation factor 2 (EF-2), to form an intermediate called diphthine. The three successive methylation reactions represent the second step of diphthamide biosynthesis. In Sulfurisphaera tokodaii (strain DSM 16993 / JCM 10545 / NBRC 100140 / 7) (Sulfolobus tokodaii), this protein is Diphthine synthase.